Here is a 203-residue protein sequence, read N- to C-terminus: SOSS complex subunit B1-A (203 aa).

A DNA-binding region (OB) is located at residues I22–L92. Residues E110–R203 form a disordered region. A compositionally biased stretch (low complexity) spans Q118 to S140. Positions E149–H182 are enriched in polar residues.

This sequence belongs to the SOSS-B family. SOSS-B1 subfamily. In terms of assembly, component of the SOSS complex, composed of soss-b (soss-b1/nabp2 or soss-b2/nabp1), soss-a/ints3 and soss-c/inip. SOSS complexes containing soss-b1/nabp2 are more abundant than complexes containing soss-b2/nabp1.

Its subcellular location is the nucleus. Component of the SOSS complex, a multiprotein complex that functions downstream of the MRN complex to promote DNA repair and G2/M checkpoint. In the SOSS complex, acts as a sensor of single-stranded DNA that binds to single-stranded DNA. The SOSS complex associates with DNA lesions and influences diverse endpoints in the cellular DNA damage response including cell-cycle checkpoint activation, recombinational repair and maintenance of genomic stability. Required for efficient homologous recombination-dependent repair of double-strand breaks (DSBs). The chain is SOSS complex subunit B1-A (nabp2-a) from Xenopus laevis (African clawed frog).